The sequence spans 100 residues: MQLTPQEKDKLLIFTAALVAERRKNRGLKLNYPEAVAYISAAILEGARDGNTVSELMSYGTTLLTRDDVMEGIAEMVHEVQVEATFPDGTKLVTVHNPIR.

It belongs to the urease gamma subunit family. In terms of assembly, heterotrimer of UreA (gamma), UreB (beta) and UreC (alpha) subunits. Three heterotrimers associate to form the active enzyme.

It is found in the cytoplasm. The enzyme catalyses urea + 2 H2O + H(+) = hydrogencarbonate + 2 NH4(+). It functions in the pathway nitrogen metabolism; urea degradation; CO(2) and NH(3) from urea (urease route): step 1/1. In Nostoc sp. (strain PCC 7120 / SAG 25.82 / UTEX 2576), this protein is Urease subunit gamma.